The primary structure comprises 115 residues: NADH-ubiquinone oxidoreductase chain 3 (115 aa).

3 consecutive transmembrane segments (helical) span residues 3–23 (LPLALTTSITLTLLLVTIAFW), 55–75 (FFLVAITFLLFDLEIALLLPL), and 86–106 (LMLTVALVLITILAAGLAYEW).

Belongs to the complex I subunit 3 family. Core subunit of respiratory chain NADH dehydrogenase (Complex I) which is composed of 45 different subunits. Interacts with TMEM186. Interacts with TMEM242.

It localises to the mitochondrion inner membrane. It catalyses the reaction a ubiquinone + NADH + 5 H(+)(in) = a ubiquinol + NAD(+) + 4 H(+)(out). Its function is as follows. Core subunit of the mitochondrial membrane respiratory chain NADH dehydrogenase (Complex I) which catalyzes electron transfer from NADH through the respiratory chain, using ubiquinone as an electron acceptor. Essential for the catalytic activity of complex I. The chain is NADH-ubiquinone oxidoreductase chain 3 from Lemur catta (Ring-tailed lemur).